Reading from the N-terminus, the 401-residue chain is Argininosuccinate synthase (401 aa).

9–17 contacts ATP; the sequence is AYSGGLDTS. Y88 lines the L-citrulline pocket. Position 118 (G118) interacts with ATP. T120, N124, and D125 together coordinate L-aspartate. N124 contributes to the L-citrulline binding site. L-citrulline contacts are provided by R128, S176, S185, E261, and Y273.

It belongs to the argininosuccinate synthase family. Type 1 subfamily. As to quaternary structure, homotetramer.

It is found in the cytoplasm. It catalyses the reaction L-citrulline + L-aspartate + ATP = 2-(N(omega)-L-arginino)succinate + AMP + diphosphate + H(+). It participates in amino-acid biosynthesis; L-arginine biosynthesis; L-arginine from L-ornithine and carbamoyl phosphate: step 2/3. The polypeptide is Argininosuccinate synthase (Symbiobacterium thermophilum (strain DSM 24528 / JCM 14929 / IAM 14863 / T)).